The chain runs to 49 residues: Large ribosomal subunit protein bL33 (49 aa).

This sequence belongs to the bacterial ribosomal protein bL33 family.

This chain is Large ribosomal subunit protein bL33, found in Moorella thermoacetica (strain ATCC 39073 / JCM 9320).